Consider the following 229-residue polypeptide: 2,3-bisphosphoglycerate-dependent phosphoglycerate mutase (229 aa).

Residues 7-14 (RHGQSEWN), 20-21 (TG), Arg-59, 86-89 (ERHY), Lys-97, 113-114 (RR), and 182-183 (GN) contribute to the substrate site. Catalysis depends on His-8, which acts as the Tele-phosphohistidine intermediate. Residue Glu-86 is the Proton donor/acceptor of the active site.

The protein belongs to the phosphoglycerate mutase family. BPG-dependent PGAM subfamily.

The catalysed reaction is (2R)-2-phosphoglycerate = (2R)-3-phosphoglycerate. It functions in the pathway carbohydrate degradation; glycolysis; pyruvate from D-glyceraldehyde 3-phosphate: step 3/5. In terms of biological role, catalyzes the interconversion of 2-phosphoglycerate and 3-phosphoglycerate. In Listeria monocytogenes serotype 4b (strain F2365), this protein is 2,3-bisphosphoglycerate-dependent phosphoglycerate mutase.